A 73-amino-acid chain; its full sequence is Translation initiation factor IF-1 (73 aa).

Residues 1 to 73 (MSEKEAGIEV…SRGRITYRDK (73 aa)) form the S1-like domain.

The protein belongs to the IF-1 family. As to quaternary structure, component of the 30S ribosomal translation pre-initiation complex which assembles on the 30S ribosome in the order IF-2 and IF-3, IF-1 and N-formylmethionyl-tRNA(fMet); mRNA recruitment can occur at any time during PIC assembly.

Its subcellular location is the cytoplasm. Functionally, one of the essential components for the initiation of protein synthesis. Stabilizes the binding of IF-2 and IF-3 on the 30S subunit to which N-formylmethionyl-tRNA(fMet) subsequently binds. Helps modulate mRNA selection, yielding the 30S pre-initiation complex (PIC). Upon addition of the 50S ribosomal subunit IF-1, IF-2 and IF-3 are released leaving the mature 70S translation initiation complex. This Anaeromyxobacter dehalogenans (strain 2CP-C) protein is Translation initiation factor IF-1.